Consider the following 309-residue polypeptide: Probable manganese-dependent inorganic pyrophosphatase (309 aa).

Residues H9, D13, D15, D75, H97, and D149 each coordinate Mn(2+).

The protein belongs to the PPase class C family. The cofactor is Mn(2+).

It is found in the cytoplasm. The catalysed reaction is diphosphate + H2O = 2 phosphate + H(+). In Lactiplantibacillus plantarum (strain ATCC BAA-793 / NCIMB 8826 / WCFS1) (Lactobacillus plantarum), this protein is Probable manganese-dependent inorganic pyrophosphatase.